The chain runs to 377 residues: 3-dehydroquinate synthase (377 aa).

Residues 115 to 119 (GVIGD), 139 to 140 (TS), K152, and K161 contribute to the NAD(+) site. 3 residues coordinate Zn(2+): E194, H256, and H275.

It belongs to the sugar phosphate cyclases superfamily. Dehydroquinate synthase family. Requires NAD(+) as cofactor. The cofactor is Co(2+). Zn(2+) is required as a cofactor.

It localises to the cytoplasm. The catalysed reaction is 7-phospho-2-dehydro-3-deoxy-D-arabino-heptonate = 3-dehydroquinate + phosphate. The protein operates within metabolic intermediate biosynthesis; chorismate biosynthesis; chorismate from D-erythrose 4-phosphate and phosphoenolpyruvate: step 2/7. Its function is as follows. Catalyzes the conversion of 3-deoxy-D-arabino-heptulosonate 7-phosphate (DAHP) to dehydroquinate (DHQ). This Rhizobium meliloti (strain 1021) (Ensifer meliloti) protein is 3-dehydroquinate synthase.